The following is a 219-amino-acid chain: Endo-type membrane-bound lytic murein transglycosylase A-like protein (219 aa).

The protein belongs to the transglycosylase Slt family.

The enzyme catalyses Endolytic cleavage of the (1-&gt;4)-beta-glycosidic linkage between N-acetylmuramic acid (MurNAc) and N-acetylglucosamine (GlcNAc) residues in peptidoglycan with concomitant formation of a 1,6-anhydrobond in the MurNAc residue.. Its function is as follows. Murein-degrading enzyme. May play a role in recycling of muropeptides during cell elongation and/or cell division (Potential). In Shigella flexneri, this protein is Endo-type membrane-bound lytic murein transglycosylase A-like protein.